Consider the following 257-residue polypeptide: Protein windbeutel (257 aa).

The N-terminal stretch at 1 to 21 is a signal peptide; the sequence is MMHILVTLLLVAIHSIPTTWA. The CXXC motif stretch occupies residues 24–27; it reads CTGC. The Prevents secretion from ER signature appears at 254–257; that stretch reads KEEL.

In terms of assembly, homodimer. Interacts with pip; the interaction is direct and does not require pip to be folded. As to expression, briefly expressed in the follicle cells of the ovary, at around the time when the dorsoventral axis of the egg chamber is first established.

Its subcellular location is the endoplasmic reticulum lumen. In terms of biological role, probable chaperone protein involved in dorsoventral axis patterning in early embryos. Probably acts by folding and targeting pipe (pip) into the Golgi. The polypeptide is Protein windbeutel (Drosophila melanogaster (Fruit fly)).